The sequence spans 222 residues: Putative auxin response factor 23 (222 aa).

Positions 126–222 (FTKVLTASDT…ETGELRVGIR (97 aa)) form a DNA-binding region, TF-B3.

It belongs to the ARF family. Homo and heterodimers.

The protein localises to the nucleus. Its function is as follows. Auxin response factors (ARFs) are transcriptional factors that binds specifically to the DNA sequence 5'-TGTCTC-3' found in the auxin-responsive promoter elements (AuxREs). Could act as transcriptional activator or repressor. Formation of heterodimers with Aux/IAA proteins may alter their ability to modulate early auxin response genes expression. The protein is Putative auxin response factor 23 (ARF23) of Arabidopsis thaliana (Mouse-ear cress).